We begin with the raw amino-acid sequence, 632 residues long: Asparagine synthetase [glutamine-hydrolyzing] 1 (632 aa).

Residue cysteine 2 is the For GATase activity of the active site. The region spanning 2 to 214 is the Glutamine amidotransferase type-2 domain; it reads CGFVGVFNKH…PGSQFTIRPD (213 aa). L-glutamine-binding positions include 52-56, 77-79, and aspartate 102; these read RLSII and NGE. Residues valine 288 and 361-362 contribute to the ATP site; that span reads SG.

The protein belongs to the asparagine synthetase family.

The enzyme catalyses L-aspartate + L-glutamine + ATP + H2O = L-asparagine + L-glutamate + AMP + diphosphate + H(+). It functions in the pathway amino-acid biosynthesis; L-asparagine biosynthesis; L-asparagine from L-aspartate (L-Gln route): step 1/1. Its function is as follows. Main asparagine synthetase in vegetative cells. The chain is Asparagine synthetase [glutamine-hydrolyzing] 1 (asnB) from Bacillus subtilis (strain 168).